A 313-amino-acid chain; its full sequence is Olfactory receptor 1J4 (313 aa).

Topologically, residues 1–25 are extracellular; the sequence is MKRENQSSVSEFLLLDLPIWPEQQA. The N-linked (GlcNAc...) asparagine glycan is linked to Asn-5. The chain crosses the membrane as a helical span at residues 26–49; that stretch reads VFFTLFLGMYLITVLGNLLIILLI. Residues 50–57 lie on the Cytoplasmic side of the membrane; sequence RLDSHLHT. The helical transmembrane segment at 58 to 79 threads the bilayer; the sequence is PMFFFLSHLALTDISLSSVTVP. Residues 80 to 100 lie on the Extracellular side of the membrane; it reads KMLLSMQTQDQSILYAGCVTQ. Cys-97 and Cys-189 form a disulfide bridge. Residues 101 to 120 form a helical membrane-spanning segment; that stretch reads MYFFIFFTDLDNFLLTSMAY. Residues 121-139 are Cytoplasmic-facing; it reads DRYVAICHPLRYTTIMKEG. The chain crosses the membrane as a helical span at residues 140–158; that stretch reads LCNLLVTVSWILSCTNALS. Residues 159-195 are Extracellular-facing; it reads HTLLLAQLSFCADNTIPHFFCDLVALLKLSCSDISLN. Residues 196–219 form a helical membrane-spanning segment; that stretch reads ELVIFTVGQAVITLPLICILISYG. The Cytoplasmic segment spans residues 220 to 236; sequence HIGVTILKAPSTKGIFK. A helical transmembrane segment spans residues 237–259; that stretch reads ALSTCGSHLSVVSLYYGTIIGLY. Topologically, residues 260-272 are extracellular; that stretch reads FLPSSSASSDKDV. A helical membrane pass occupies residues 273–292; the sequence is IASVMYTVITPLLNPFIYSL. At 293 to 313 the chain is on the cytoplasmic side; it reads RNRDIKGALERLFNRATVLSQ.

This sequence belongs to the G-protein coupled receptor 1 family.

The protein resides in the cell membrane. Odorant receptor. The polypeptide is Olfactory receptor 1J4 (OR1J4) (Homo sapiens (Human)).